Here is a 665-residue protein sequence, read N- to C-terminus: MTSANKAIELQLQVKQNAEELQDFMRDLENWEKDIKQKDMELRRQNGVPEENLPPIRNGNFRKKKKGKAKESSKKTREENTKNRIKSYDYEAWAKLDVDRILDELDKDDSTHESLSQESESEEDGIHVDSQKALVLKEKGNKYFKQGKYDEAIDCYTKGMDADPYNPVLPTNRASAYFRLKKFAVAESDCNLAVALNRSYTKAYSRRGAARFALQKLEEAKKDYERVLELEPNNFEATNELRKISQALASKENSYPKEADIVIKSTEGERKQIEAQQNKQQAISEKDRGNGFFKEGKYERAIECYTRGIAADGANALLPANRAMAYLKIQKYEEAEKDCTQAILLDGSYSKAFARRGTARTFLGKLNEAKQDFETVLLLEPGNKQAVTELSKIKKELIEKGHWDDVFLDSTQRQNVVKPIDNPPHPGSTKPLKKVIIEETGNLIQTIDVPDSTTAAAPENNPINLANVIAATGTTSKKNSSQDDLFPTSDTPRAKVLKIEEVSDTSSLQPQASLKQDVCQSYSEKMPIEIEQKPAQFATTVLPPIPANSFQLESDFRQLKSSPDMLYQYLKQIEPSLYPKLFQKNLDPDVFNQIVKILHDFYIEKEKPLLIFEILQRLSELKRFDMAVMFMSETEKKIARALFNHIDKSGLKDSSVEELKKRYGG.

Residue threonine 2 is modified to N-acetylthreonine. Residues 8-41 (IELQLQVKQNAEELQDFMRDLENWEKDIKQKDME) form a TPR 1 repeat. The segment at 37–82 (QKDMELRRQNGVPEENLPPIRNGNFRKKKKGKAKESSKKTREENTK) is disordered. A compositionally biased stretch (basic and acidic residues) spans 69 to 82 (AKESSKKTREENTK). Residues serine 87, serine 116, serine 119, and serine 121 each carry the phosphoserine modification. Positions 109-129 (DSTHESLSQESESEEDGIHVD) are disordered. TPR repeat units lie at residues 133 to 166 (ALVL…DPYN), 168 to 200 (VLPT…NRSY), 201 to 234 (TKAY…EPNN), 282 to 315 (AISE…DGAN), 317 to 349 (LLPA…DGSY), and 350 to 383 (SKAF…EPGN). At serine 481 the chain carries Phosphoserine. Lysine 498 is covalently cross-linked (Glycyl lysine isopeptide (Lys-Gly) (interchain with G-Cter in SUMO2)).

This sequence belongs to the RPAP3 family. In terms of assembly, tightly associated with the RNA polymerase II complex. Component of the R2TP complex composed at least of RUVBL1, RUVBL2, RPAP3 and PIHD1. Component of the PAQosome complex which is responsible for the biogenesis of several protein complexes and which consists of R2TP complex members RUVBL1, RUVBL2, RPAP3 and PIH1D1, URI complex members PFDN2, PFDN6, PDRG1, UXT and URI1 as well as ASDURF, POLR2E and DNAAF10/WDR92. Interacts with PIH1D1. Interacts with TSC1 and TSC2. Interacts with PRPF8 and EFTUD2 in a ZNHIT2-dependent manner.

Functionally, forms an interface between the RNA polymerase II enzyme and chaperone/scaffolding protein, suggesting that it is required to connect RNA polymerase II to regulators of protein complex formation. In Homo sapiens (Human), this protein is RNA polymerase II-associated protein 3 (RPAP3).